The sequence spans 123 residues: Large ribosomal subunit protein uL14 (123 aa).

It belongs to the universal ribosomal protein uL14 family. In terms of assembly, part of the 50S ribosomal subunit. Forms a cluster with proteins L3 and L19. In the 70S ribosome, L14 and L19 interact and together make contacts with the 16S rRNA in bridges B5 and B8.

In terms of biological role, binds to 23S rRNA. Forms part of two intersubunit bridges in the 70S ribosome. The sequence is that of Large ribosomal subunit protein uL14 from Buchnera aphidicola subsp. Acyrthosiphon kondoi (Acyrthosiphon kondoi symbiotic bacterium).